The primary structure comprises 461 residues: Nicotianamine aminotransferase A (461 aa).

A disordered region spans residues 1-29 (MVHQSNGHGEAAAAAANGKSNGHAAAANG). A compositionally biased stretch (low complexity) spans 11-29 (AAAAAANGKSNGHAAAANG). An N6-(pyridoxal phosphate)lysine modification is found at K289.

Belongs to the class-I pyridoxal-phosphate-dependent aminotransferase family. Requires pyridoxal 5'-phosphate as cofactor. Expressed in roots, but not in leaves.

The enzyme catalyses nicotianamine + 2-oxoglutarate = 3''-deamino-3''-oxonicotianamine + L-glutamate. Involved in biosynthesis of mugineic acid family phytosiderophores. The polypeptide is Nicotianamine aminotransferase A (Hordeum vulgare (Barley)).